A 520-amino-acid chain; its full sequence is Glutamate--cysteine ligase (520 aa).

It belongs to the glutamate--cysteine ligase type 1 family. Type 1 subfamily.

It carries out the reaction L-cysteine + L-glutamate + ATP = gamma-L-glutamyl-L-cysteine + ADP + phosphate + H(+). The protein operates within sulfur metabolism; glutathione biosynthesis; glutathione from L-cysteine and L-glutamate: step 1/2. This is Glutamate--cysteine ligase from Serratia proteamaculans (strain 568).